The following is a 404-amino-acid chain: Coenzyme F(430) synthetase (404 aa).

112–117 (GVKGKT) provides a ligand contact to ATP.

The protein belongs to the MurCDEF family.

The enzyme catalyses 15,17(3)-seco-F430-17(3)-acid + ATP = coenzyme F430 + ADP + phosphate. Functionally, involved in the biosynthesis of the unique nickel-containing tetrapyrrole coenzyme F430, the prosthetic group of methyl-coenzyme M reductase (MCR), which plays a key role in methanogenesis and anaerobic methane oxidation. Catalyzes the activation the g-propionate side chain of 15,17(3)-seco-F430-17(3)-acid (seco-F430) for intramolecular C-C bond formation to yield the carbocyclic F ring of coenzyme F430. The sequence is that of Coenzyme F(430) synthetase from Methanocaldococcus jannaschii (strain ATCC 43067 / DSM 2661 / JAL-1 / JCM 10045 / NBRC 100440) (Methanococcus jannaschii).